The chain runs to 434 residues: Nicotinate phosphoribosyltransferase (434 aa).

A Phosphohistidine; by autocatalysis modification is found at His242.

This sequence belongs to the NAPRTase family. In terms of processing, transiently phosphorylated on a His residue during the reaction cycle. Phosphorylation strongly increases the affinity for substrates and increases the rate of nicotinate D-ribonucleotide production. Dephosphorylation regenerates the low-affinity form of the enzyme, leading to product release.

It carries out the reaction nicotinate + 5-phospho-alpha-D-ribose 1-diphosphate + ATP + H2O = nicotinate beta-D-ribonucleotide + ADP + phosphate + diphosphate. It functions in the pathway cofactor biosynthesis; NAD(+) biosynthesis; nicotinate D-ribonucleotide from nicotinate: step 1/1. In terms of biological role, catalyzes the synthesis of beta-nicotinate D-ribonucleotide from nicotinate and 5-phospho-D-ribose 1-phosphate at the expense of ATP. In Bradyrhizobium diazoefficiens (strain JCM 10833 / BCRC 13528 / IAM 13628 / NBRC 14792 / USDA 110), this protein is Nicotinate phosphoribosyltransferase.